Consider the following 1076-residue polypeptide: DNA-directed RNA polymerase subunit beta (1076 aa).

The protein belongs to the RNA polymerase beta chain family. As to quaternary structure, in plastids the minimal PEP RNA polymerase catalytic core is composed of four subunits: alpha, beta, beta', and beta''. When a (nuclear-encoded) sigma factor is associated with the core the holoenzyme is formed, which can initiate transcription.

It localises to the plastid. It is found in the chloroplast. It carries out the reaction RNA(n) + a ribonucleoside 5'-triphosphate = RNA(n+1) + diphosphate. DNA-dependent RNA polymerase catalyzes the transcription of DNA into RNA using the four ribonucleoside triphosphates as substrates. This chain is DNA-directed RNA polymerase subunit beta, found in Lolium perenne (Perennial ryegrass).